Reading from the N-terminus, the 531-residue chain is MAAVKTLNPKAEVARAQAALAVNISAARGLQDVLRTNLGPKGTMKMLVSGAGDIKLTKDGNVLLHEMQIQHPTASLIAKVATAQDDITGDGTTSNVLIIGELLKQADLYISEGLHPRIITEGFEAAKEKALQFLEQVKVSKEMDRETLIDVARTSLRTKVHAELADVLTEAVVDSILAIKKQDEPIDLFMVEIMEMKHKSETDTSLIRGLVLDHGARHPDMKKRVEDAYILTCNVSLEYEKTEVNSGFFYKSAEEREKLVKAERKFIEDRVKKIIELKKKVCGDSDKGFVVINQKGIDPFSLDALAKEGIIALRRAKRRNMERLTLACGGIALNSLDDLNPDCLGHAGLVYEYTLGEEKFTFIEKCNNPRSVTLLIKGPNKHTLTQIKDAIRDGLRAVKNAIDDGCVVPGAGAVEVAMAEALVKYKPSVKGRAQLGVQAFADALLIIPKVLAQNSGFDLQETLVKVQAEHSESGQLVGVDLNTGEPMVAAEAGIWDNYCVKKQLLHSCTVIATNILLVDEIMRAGMSSLKG.

Ala2 is modified (N-acetylalanine). N6-acetyllysine is present on Lys5. Residue Gly39 coordinates ADP. Gly39 contacts ATP. Asp90 provides a ligand contact to Mg(2+). Gly91, Thr92, Thr93, Ser94, Thr158, and Lys159 together coordinate ADP. Positions 91, 92, and 93 each coordinate ATP. Lys199 is subject to N6-acetyllysine. Ser205 carries the post-translational modification Phosphoserine. Lys251 participates in a covalent cross-link: Glycyl lysine isopeptide (Lys-Gly) (interchain with G-Cter in SUMO2). Lys287, Lys365, Lys377, and Lys388 each carry N6-acetyllysine. An ADP-binding site is contributed by Ala411. 4 residues coordinate ATP: Ala411, Gly412, Asp496, and Lys501. Asp496 contacts ADP.

It belongs to the TCP-1 chaperonin family. In terms of assembly, component of the chaperonin-containing T-complex (TRiC), a hexadecamer composed of two identical back-to-back stacked rings enclosing a protein folding chamber. Each ring is made up of eight different subunits: TCP1/CCT1, CCT2, CCT3, CCT4, CCT5, CCT6A/CCT6, CCT7, CCT8. Interacts with PACRG.

It localises to the cytoplasm. The catalysed reaction is ATP + H2O = ADP + phosphate + H(+). Component of the chaperonin-containing T-complex (TRiC), a molecular chaperone complex that assists the folding of actin, tubulin and other proteins upon ATP hydrolysis. The TRiC complex mediates the folding of WRAP53/TCAB1, thereby regulating telomere maintenance. This chain is T-complex protein 1 subunit zeta (CCT6A), found in Bos taurus (Bovine).